Here is a 279-residue protein sequence, read N- to C-terminus: Probable endonuclease 4 (279 aa).

Zn(2+) contacts are provided by His-67, His-107, Glu-144, Asp-177, His-180, His-214, Asp-227, His-229, and Glu-259.

This sequence belongs to the AP endonuclease 2 family. Zn(2+) serves as cofactor.

It catalyses the reaction Endonucleolytic cleavage to 5'-phosphooligonucleotide end-products.. Functionally, endonuclease IV plays a role in DNA repair. It cleaves phosphodiester bonds at apurinic or apyrimidinic (AP) sites, generating a 3'-hydroxyl group and a 5'-terminal sugar phosphate. The polypeptide is Probable endonuclease 4 (Sulfurihydrogenibium sp. (strain YO3AOP1)).